A 128-amino-acid chain; its full sequence is Anion exchange transporter (128 aa).

The Extracellular segment spans residues 1-14 (LFSFKELNEQFKRK). Residues 15–35 (IKVVLPVDLVLIIAASFACYC) form a helical membrane-spanning segment. The Cytoplasmic portion of the chain corresponds to 36 to 66 (TNMENTYGLEVVGHIPRGIPPPRAPPMNILS). The helical transmembrane segment at 67–87 (AVITEAFGVALVGYAASLALA) threads the bilayer. At 88 to 103 (QGSAKKFKYSVDDNQE) the chain is on the extracellular side. Residues 104 to 124 (FLAHGLSNVISSFLFCIPSAA) traverse the membrane as a helical segment. At 125-128 (AMGR) the chain is on the cytoplasmic side.

Belongs to the SLC26A/SulP transporter (TC 2.A.53) family. Expressed in gastric epithelium, predominantly in the gastric parietal cells but also at lower levels in mucosal cells.

It localises to the basolateral cell membrane. The protein localises to the recycling endosome membrane. It is found in the apical cell membrane. The protein resides in the lateral cell membrane. The enzyme catalyses chloride(in) = chloride(out). The catalysed reaction is iodide(out) = iodide(in). It catalyses the reaction bromide(in) = bromide(out). It carries out the reaction oxalate(in) = oxalate(out). The enzyme catalyses nitrate(in) = nitrate(out). The catalysed reaction is sulfate(in) = sulfate(out). It catalyses the reaction D-gluconate(in) = D-gluconate(out). It carries out the reaction thiocyanate(in) = thiocyanate(out). The enzyme catalyses hydrogencarbonate(in) = hydrogencarbonate(out). The catalysed reaction is hydrogencarbonate(in) + chloride(out) = hydrogencarbonate(out) + chloride(in). In terms of biological role, acts as an anion channel mediating the transport of chloride, bromide, iodide, nitrate, sulfate, gluconate, thiocyanate, oxalate and bicarbonate ions. Its permeability towards bicarbonate is weak and increases when pH is above 7. Mediates thiocyanate transport in retinal pigment epithelium cells. Mediates iodide transport in the thyroid gland, playing an important role in the synthesis of thyroid hormones and the maintenance of thyroid function. This Oryctolagus cuniculus (Rabbit) protein is Anion exchange transporter.